A 225-amino-acid chain; its full sequence is 7-cyano-7-deazaguanine synthase (225 aa).

Position 7 to 17 (7 to 17 (LSGGMDSTTLL)) interacts with ATP. Residues Cys183, Cys191, Cys194, and Cys197 each contribute to the Zn(2+) site.

It belongs to the QueC family. As to quaternary structure, homodimer. It depends on Zn(2+) as a cofactor.

The catalysed reaction is 7-carboxy-7-deazaguanine + NH4(+) + ATP = 7-cyano-7-deazaguanine + ADP + phosphate + H2O + H(+). It participates in purine metabolism; 7-cyano-7-deazaguanine biosynthesis. Functionally, catalyzes the ATP-dependent conversion of 7-carboxy-7-deazaguanine (CDG) to 7-cyano-7-deazaguanine (preQ(0)). This is 7-cyano-7-deazaguanine synthase from Caldicellulosiruptor saccharolyticus (strain ATCC 43494 / DSM 8903 / Tp8T 6331).